The chain runs to 139 residues: MADVDVDVPSAAPVLDGAMDINTALQEVLKKSLIADGLVHGIHQACKALDKRQAVLCILAESFDEPNYKKLVTALCNEHQIPLIRVDSHKKLGEWSGLCKIDKEGKPRKVCGCSVVVIKDFGEETPALDVVKDHLRQNS.

Belongs to the eukaryotic ribosomal protein eS12 family. As to quaternary structure, subunit of the 40S ribosomal complex. Part of the small subunit (SSU) processome, composed of more than 70 proteins and the RNA chaperone small nucleolar RNA (snoRNA) U3.

The protein localises to the nucleus. Its subcellular location is the nucleolus. In terms of biological role, subunit of the 40S ribosomal complex. Part of the small subunit (SSU) processome, first precursor of the small eukaryotic ribosomal subunit. During the assembly of the SSU processome in the nucleolus, many ribosome biogenesis factors, an RNA chaperone and ribosomal proteins associate with the nascent pre-rRNA and work in concert to generate RNA folding, modifications, rearrangements and cleavage as well as targeted degradation of pre-ribosomal RNA by the RNA exosome. In wing imaginal disks, might have a role in translation rate, growth and cell competition, probably through regulation of Xrp1 expression. Might have a role in development and longevity. This chain is Small ribosomal subunit protein eS12, found in Drosophila melanogaster (Fruit fly).